The following is a 506-amino-acid chain: Maturase K (506 aa).

This sequence belongs to the intron maturase 2 family. MatK subfamily.

The protein resides in the plastid. Its subcellular location is the chloroplast. Its function is as follows. Usually encoded in the trnK tRNA gene intron. Probably assists in splicing its own and other chloroplast group II introns. This Lathyrus aphaca (Yellow vetchling) protein is Maturase K.